Reading from the N-terminus, the 342-residue chain is Flap endonuclease 1 (342 aa).

Positions 1–99 (MGVKIGELIE…RAIEERVRAR (99 aa)) are N-domain. The Mg(2+) site is built by D28, D81, E153, E155, D174, D176, and D237. Residues 117-259 (EARKYAQAAL…RALELVKKYK (143 aa)) form an I-domain region.

This sequence belongs to the XPG/RAD2 endonuclease family. FEN1 subfamily. As to quaternary structure, interacts with PCNA. PCNA stimulates the nuclease activity without altering cleavage specificity. It depends on Mg(2+) as a cofactor.

Functionally, structure-specific nuclease with 5'-flap endonuclease and 5'-3' exonuclease activities involved in DNA replication and repair. During DNA replication, cleaves the 5'-overhanging flap structure that is generated by displacement synthesis when DNA polymerase encounters the 5'-end of a downstream Okazaki fragment. Binds the unpaired 3'-DNA end and kinks the DNA to facilitate 5' cleavage specificity. Cleaves one nucleotide into the double-stranded DNA from the junction in flap DNA, leaving a nick for ligation. Also involved in the base excision repair (BER) pathway. Acts as a genome stabilization factor that prevents flaps from equilibrating into structures that lead to duplications and deletions. Also possesses 5'-3' exonuclease activity on nicked or gapped double-stranded DNA. The sequence is that of Flap endonuclease 1 from Korarchaeum cryptofilum (strain OPF8).